The sequence spans 218 residues: Cytochrome b6 (218 aa).

Residues 35–55 (IFYCLGGITLVCFLIQFATGF) traverse the membrane as a helical segment. Residue cysteine 38 participates in heme c binding. Heme b is bound by residues histidine 89 and histidine 103. The next 3 membrane-spanning stretches (helical) occupy residues 93–113 (ASMM…TGGF), 119–139 (LTWV…VTGY), and 189–209 (LHTF…FLMI). Positions 190 and 205 each coordinate heme b.

It belongs to the cytochrome b family. PetB subfamily. As to quaternary structure, the 4 large subunits of the cytochrome b6-f complex are cytochrome b6, subunit IV (17 kDa polypeptide, PetD), cytochrome f and the Rieske protein, while the 4 small subunits are PetG, PetL, PetM and PetN. The complex functions as a dimer. The cofactor is heme b. It depends on heme c as a cofactor.

The protein localises to the cellular thylakoid membrane. In terms of biological role, component of the cytochrome b6-f complex, which mediates electron transfer between photosystem II (PSII) and photosystem I (PSI), cyclic electron flow around PSI, and state transitions. The sequence is that of Cytochrome b6 from Prochlorococcus marinus subsp. pastoris (strain CCMP1986 / NIES-2087 / MED4).